The sequence spans 183 residues: Threonylcarbamoyl-AMP synthase (183 aa).

A YrdC-like domain is found at 1 to 183; the sequence is MELAQIVERL…IFSRQIFRRG (183 aa).

It belongs to the SUA5 family. TsaC subfamily.

It is found in the cytoplasm. It carries out the reaction L-threonine + hydrogencarbonate + ATP = L-threonylcarbamoyladenylate + diphosphate + H2O. In terms of biological role, required for the formation of a threonylcarbamoyl group on adenosine at position 37 (t(6)A37) in tRNAs that read codons beginning with adenine. Catalyzes the conversion of L-threonine, HCO(3)(-)/CO(2) and ATP to give threonylcarbamoyl-AMP (TC-AMP) as the acyladenylate intermediate, with the release of diphosphate. This is Threonylcarbamoyl-AMP synthase from Mannheimia succiniciproducens (strain KCTC 0769BP / MBEL55E).